Consider the following 676-residue polypeptide: RNA helicase NPH-II (676 aa).

The region spanning 172–347 is the Helicase ATP-binding domain; it reads FSAWISHRPV…VFLPNPAFIH (176 aa). 185 to 192 is an ATP binding site; sequence GGTGVGKT. The short motif at 296–299 is the DEXH box element; that stretch reads DEVH. Residues 366 to 535 form the Helicase C-terminal domain; that stretch reads NPSSRMAYIE…NYILYANKFN (170 aa).

It belongs to the DEAD box helicase family. DEAH subfamily. In terms of assembly, monomer.

It is found in the virion. The catalysed reaction is ATP + H2O = ADP + phosphate + H(+). In terms of biological role, NTP-dependent helicase that catalyzes unidirectional unwinding of 3'tailed duplex RNAs and plays an important role during transcription of early mRNAs, presumably by preventing R-loop formation behind the elongating RNA polymerase. Might also play a role in the export of newly synthesized mRNA chains out of the core into the cytoplasm. Required for replication and propagation of viral particles. The polypeptide is RNA helicase NPH-II (OPG084) (Vaccinia virus (strain Copenhagen) (VACV)).